The following is a 415-amino-acid chain: Serine hydroxymethyltransferase (415 aa).

Residues L121 and 125 to 127 (GHL) each bind (6S)-5,6,7,8-tetrahydrofolate. K230 is modified (N6-(pyridoxal phosphate)lysine). Position 355 to 357 (355 to 357 (SPF)) interacts with (6S)-5,6,7,8-tetrahydrofolate.

The protein belongs to the SHMT family. As to quaternary structure, homodimer. It depends on pyridoxal 5'-phosphate as a cofactor.

Its subcellular location is the cytoplasm. The enzyme catalyses (6R)-5,10-methylene-5,6,7,8-tetrahydrofolate + glycine + H2O = (6S)-5,6,7,8-tetrahydrofolate + L-serine. It functions in the pathway one-carbon metabolism; tetrahydrofolate interconversion. It participates in amino-acid biosynthesis; glycine biosynthesis; glycine from L-serine: step 1/1. In terms of biological role, catalyzes the reversible interconversion of serine and glycine with tetrahydrofolate (THF) serving as the one-carbon carrier. This reaction serves as the major source of one-carbon groups required for the biosynthesis of purines, thymidylate, methionine, and other important biomolecules. Also exhibits THF-independent aldolase activity toward beta-hydroxyamino acids, producing glycine and aldehydes, via a retro-aldol mechanism. This chain is Serine hydroxymethyltransferase, found in Lactococcus lactis subsp. lactis (strain IL1403) (Streptococcus lactis).